The chain runs to 73 residues: MKSFYHYLMKYRHPKPKDAISEFANHAYLDHGFPKASTHYDEISSYLELNGDYLSSMTTFDEAWERYISETKR.

The protein belongs to the UPF0346 family.

The sequence is that of UPF0346 protein BLi02292/BL01432 from Bacillus licheniformis (strain ATCC 14580 / DSM 13 / JCM 2505 / CCUG 7422 / NBRC 12200 / NCIMB 9375 / NCTC 10341 / NRRL NRS-1264 / Gibson 46).